The sequence spans 378 residues: Cobalt-precorrin-5B C(1)-methyltransferase (378 aa).

This sequence belongs to the CbiD family.

The catalysed reaction is Co-precorrin-5B + S-adenosyl-L-methionine = Co-precorrin-6A + S-adenosyl-L-homocysteine. Its pathway is cofactor biosynthesis; adenosylcobalamin biosynthesis; cob(II)yrinate a,c-diamide from sirohydrochlorin (anaerobic route): step 6/10. Catalyzes the methylation of C-1 in cobalt-precorrin-5B to form cobalt-precorrin-6A. The sequence is that of Cobalt-precorrin-5B C(1)-methyltransferase from Thermoplasma volcanium (strain ATCC 51530 / DSM 4299 / JCM 9571 / NBRC 15438 / GSS1).